Consider the following 214-residue polypeptide: Thymidylate kinase (214 aa).

Position 7–14 (7–14) interacts with ATP; the sequence is GIDGAGKS.

Belongs to the thymidylate kinase family.

It catalyses the reaction dTMP + ATP = dTDP + ADP. Its function is as follows. Phosphorylation of dTMP to form dTDP in both de novo and salvage pathways of dTTP synthesis. In Chlorobium luteolum (strain DSM 273 / BCRC 81028 / 2530) (Pelodictyon luteolum), this protein is Thymidylate kinase.